The chain runs to 600 residues: Polypeptide N-acetylgalactosaminyltransferase (600 aa).

Over 1–7 (MVRRKLR) the chain is Cytoplasmic. The helical; Signal-anchor for type II membrane protein transmembrane segment at 8-28 (LLVILAGIWLVGIVVYLFKGD) threads the bilayer. Residues 29-600 (DQSEFEKRVI…KWTFSLSKNR (572 aa)) are Lumenal-facing. Cystine bridges form between C154–C382, C373–C451, C484–C501, C524–C541, and C567–C583. The tract at residues 163–268 (LPDTSVIITF…EKWLEPLLDR (106 aa)) is catalytic subdomain A. The substrate site is built by T171, D204, and R229. D252 serves as a coordination point for Mn(2+). Residue S253 coordinates substrate. H254 is a binding site for Mn(2+). Residues 328–390 (PIRTPMIAGG…PCSRVGHVFR (63 aa)) form a catalytic subdomain B region. W359 is a substrate binding site. H387 lines the Mn(2+) pocket. The substrate site is built by R390, H393, and Y395. The region spanning 466-595 (KIPSVQDIAF…SSYTQKWTFS (130 aa)) is the Ricin B-type lectin domain.

Belongs to the glycosyltransferase 2 family. GalNAc-T subfamily. The cofactor is Mn(2+). Post-translationally, O-glycosylated.

The protein localises to the golgi apparatus membrane. The catalysed reaction is L-seryl-[protein] + UDP-N-acetyl-alpha-D-galactosamine = a 3-O-[N-acetyl-alpha-D-galactosaminyl]-L-seryl-[protein] + UDP + H(+). It carries out the reaction L-threonyl-[protein] + UDP-N-acetyl-alpha-D-galactosamine = a 3-O-[N-acetyl-alpha-D-galactosaminyl]-L-threonyl-[protein] + UDP + H(+). It functions in the pathway protein modification; protein glycosylation. Its activity is regulated as follows. No change in activity by addition of up to 10% methanol or glycerol, or 5% acetonitrile. 40% reduction in activity by 10% acetonitrile or by lyophilization. Activity requires divalent cations, the best being Mn(2+) (10-20 mM), followed by Co(2+), Mg(2+) and Ca(2+). Loss of activity with Cu(2+) or in the presence of EDTA. Inhibited by UDP, but not by UMP, UTP, ADP or GDP nucleotides. No inhibition by galactose, N-acetylglucosamine or N-acetylgalactosamine sugars. Its function is as follows. Catalyzes the initial reaction in O-linked oligosaccharide biosynthesis, the transfer of an N-acetyl-D-galactosamine residue to a serine or threonine residue on the protein receptor. Has a broad substrate specificity. Acceptor peptides include Muc2, Muc5Ac, Muc1a and Muc1a', with Muc2 as the best acceptor. Acts on non-glycosylated and mono- or multi-glycosylated peptide substrates. Transfers preferably to threonine rather than serine residue. Thr-15 is the most preferred site of glycosylation in Muc2 peptide PTTTPITTTTTVTPTPTPTGTQTK having proline residues at position -1, and at positions +1 and +3, where the number represents the distance from the C-terminal and N-terminal hydroxyl amino acid, respectively. Transfer of the N-acetyl-D-galactosamine (GalNAc) is optimal with proline residues at positions -3, -1, +1 and +3, but other amino acids are tolerated, although some, such as phenylalanine, isoleucine or leucine at -1, or lysine at +3 prevent the transfer completely. Second GalNAc is transferred to Muc2 Thr-2 or Thr-13, both of which have two proline residues nearby. Up to nine sites can be glycosylated within Muc2, but eight are used simultaneously since Thr-19 and Thr-21 are not detected to be glycosylated at the same time. Glycosylation is not detected of a potential site, which is next to an already glycosylated site, but only one amino acid is needed in between two glycosylation sites. Ser-5 is the preferred glycosylation site in Muc5Ac peptide GTTPSPVPTTSTTSAP into which up to four GalNAcs can be attached. Only the threonine residues are detected as pontential glycosylation sites in Muc1a APPAHGVTSAPDTRPAPGC and Muc1a' AHGVTSAPDTR peptides. Transferase activity is restricted to UDP-GalNAc as a donor, and none of the nucleotide sugars UDP-Gal, UDP-GlcNAc, GDP-fucose, UDP-xylose, UDP-glucuronic acid or CMP-neuraminic acid are utilized as donors. This Biomphalaria glabrata (Bloodfluke planorb) protein is Polypeptide N-acetylgalactosaminyltransferase.